The following is a 92-amino-acid chain: Integration host factor subunit beta (92 aa).

Belongs to the bacterial histone-like protein family. As to quaternary structure, heterodimer of an alpha and a beta chain.

In terms of biological role, this protein is one of the two subunits of integration host factor, a specific DNA-binding protein that functions in genetic recombination as well as in transcriptional and translational control. This is Integration host factor subunit beta from Bartonella tribocorum (strain CIP 105476 / IBS 506).